We begin with the raw amino-acid sequence, 219 residues long: MSEIELEPGADPERAERARKLFSGPIAFLKSAPALQHLPVPSVPEIAFAGRSNVGKSSLLNALTNRNGLARTSVTPGRTQELNYFDVGEPPVFRLVDMPGYGFAKAPKDVVRKWRFLINDYLRGRQVLKRTLVLIDSRHGIKDVDRDVLEMLDTAAVSYRLVLTKADKIKASALADVHAATEAEARKHPAAHPEVIATSSEKGMGIAELRTAVLEAVEL.

Positions 42–219 constitute an EngB-type G domain; it reads SVPEIAFAGR…RTAVLEAVEL (178 aa). GTP is bound by residues 50–57, 77–81, 97–100, 164–167, and 198–200; these read GRSNVGKS, GRTQE, DMPG, TKAD, and TSS. Mg(2+) is bound by residues serine 57 and threonine 79.

The protein belongs to the TRAFAC class TrmE-Era-EngA-EngB-Septin-like GTPase superfamily. EngB GTPase family. Requires Mg(2+) as cofactor.

Necessary for normal cell division and for the maintenance of normal septation. This chain is Probable GTP-binding protein EngB, found in Sphingopyxis alaskensis (strain DSM 13593 / LMG 18877 / RB2256) (Sphingomonas alaskensis).